We begin with the raw amino-acid sequence, 998 residues long: Type II restriction enzyme and methyltransferase RM.Eco57I (998 aa).

This sequence in the C-terminal section; belongs to the N(4)/N(6)-methyltransferase family. Monomer.

The catalysed reaction is Endonucleolytic cleavage of DNA to give specific double-stranded fragments with terminal 5'-phosphates.. The enzyme catalyses a 2'-deoxyadenosine in DNA + S-adenosyl-L-methionine = an N(6)-methyl-2'-deoxyadenosine in DNA + S-adenosyl-L-homocysteine + H(+). Its activity is regulated as follows. Mg(2+) is absolutely required for DNA restriction. Functionally, an E, G and S subtype restriction enzyme that recognizes the (non-palindromic) double-stranded sequence 5'-CTGAAG-3' and cleaves respectively 22 bases after C-1 and 14 bases before C'-1; cleavage of lambda DNA is never complete. Also acts as a methylase that causes specific methylation on A-5 in 5'-CTGAAG-3', the other strand is methylated by the M.Eco57I methylase. The sequence is that of Type II restriction enzyme and methyltransferase RM.Eco57I from Escherichia coli.